The chain runs to 1001 residues: Protein MEI2-like 4 (1001 aa).

The disordered stretch occupies residues 100-120 (HANLPPSPWRPDQETGRQTDS). 2 RRM domains span residues 275-348 (RTLF…YSIP) and 360-433 (GTIV…TSRL). Disordered regions lie at residues 767-815 (GGPS…KKQY) and 941-1001 (FHSD…PAKD). A compositionally biased stretch (basic and acidic residues) spans 793–803 (PGERMRSRRND). A compositionally biased stretch (polar residues) spans 978–994 (DISITSVNCDTSTNGVD).

Its function is as follows. Probable RNA-binding protein that may play a role in growth regulation. In Oryza sativa subsp. japonica (Rice), this protein is Protein MEI2-like 4 (ML4).